A 405-amino-acid chain; its full sequence is Pulcherriminic acid synthase (405 aa).

Heme is bound by residues lysine 62, asparagine 229, arginine 285, and cysteine 353.

This sequence belongs to the cytochrome P450 family. In terms of assembly, homodimer. Heme is required as a cofactor.

The enzyme catalyses cyclo(L-leucyl-L-leucyl) + 6 reduced [2Fe-2S]-[ferredoxin] + 3 O2 + 4 H(+) = pulcherriminic acid + 6 oxidized [2Fe-2S]-[ferredoxin] + 4 H2O. In terms of biological role, involved in the biosynthesis of pulcherrimin, a red extracellular pigment. Catalyzes the oxidation of cyclo(L-Leu-L-Leu) (cLL) to yield pulcherriminic acid which forms pulcherrimin via a nonenzymic reaction with Fe(3+). Substrates with small alkyl groups (cAA, cLG, cLP) exhibit weaker binding to CYP134A1, but substrates with larger hydrophobic side chains bind in a similar regime to cLL. In Bacillus subtilis (strain 168), this protein is Pulcherriminic acid synthase (cypX).